The chain runs to 406 residues: Argininosuccinate synthase (406 aa).

ATP is bound by residues 12–20 (AYSGGLDTS) and alanine 39. Positions 90 and 95 each coordinate L-citrulline. Glycine 120 is a binding site for ATP. L-aspartate is bound by residues threonine 122, asparagine 126, and aspartate 127. Asparagine 126 provides a ligand contact to L-citrulline. Residues arginine 130, serine 179, serine 188, glutamate 264, and tyrosine 276 each contribute to the L-citrulline site.

This sequence belongs to the argininosuccinate synthase family. Type 1 subfamily. In terms of assembly, homotetramer.

The protein resides in the cytoplasm. It carries out the reaction L-citrulline + L-aspartate + ATP = 2-(N(omega)-L-arginino)succinate + AMP + diphosphate + H(+). It participates in amino-acid biosynthesis; L-arginine biosynthesis; L-arginine from L-ornithine and carbamoyl phosphate: step 2/3. This is Argininosuccinate synthase from Citrifermentans bemidjiense (strain ATCC BAA-1014 / DSM 16622 / JCM 12645 / Bem) (Geobacter bemidjiensis).